The primary structure comprises 89 residues: Small ribosomal subunit protein uS15 (89 aa).

Positions 1–11 are enriched in basic and acidic residues; sequence MSIAAERKAEV. Residues 1–24 form a disordered region; it reads MSIAAERKAEVIKTNATKAGDTGS.

It belongs to the universal ribosomal protein uS15 family. Part of the 30S ribosomal subunit. Forms a bridge to the 50S subunit in the 70S ribosome, contacting the 23S rRNA.

Its function is as follows. One of the primary rRNA binding proteins, it binds directly to 16S rRNA where it helps nucleate assembly of the platform of the 30S subunit by binding and bridging several RNA helices of the 16S rRNA. In terms of biological role, forms an intersubunit bridge (bridge B4) with the 23S rRNA of the 50S subunit in the ribosome. This Bradyrhizobium diazoefficiens (strain JCM 10833 / BCRC 13528 / IAM 13628 / NBRC 14792 / USDA 110) protein is Small ribosomal subunit protein uS15.